The chain runs to 255 residues: tRNA (guanine-N(1)-)-methyltransferase (255 aa).

S-adenosyl-L-methionine-binding positions include glycine 113 and 133-138 (IGDYVL).

The protein belongs to the RNA methyltransferase TrmD family. In terms of assembly, homodimer.

Its subcellular location is the cytoplasm. It carries out the reaction guanosine(37) in tRNA + S-adenosyl-L-methionine = N(1)-methylguanosine(37) in tRNA + S-adenosyl-L-homocysteine + H(+). Its function is as follows. Specifically methylates guanosine-37 in various tRNAs. The sequence is that of tRNA (guanine-N(1)-)-methyltransferase from Mannheimia succiniciproducens (strain KCTC 0769BP / MBEL55E).